The chain runs to 345 residues: Ubiquitin-associated domain-containing protein 2 (345 aa).

The first 35 residues, 1 to 35 (MFTSTGSSGLYKAPLSKSLLLVPSALSLLLALLLP), serve as a signal peptide directing secretion. Residues 36–91 (HCQKLFVYDLHAVKNDFQIWRLICGRIICLDLKDTFCSSLLIYNFRIFERRYGSRK) lie on the Extracellular side of the membrane. A helical membrane pass occupies residues 92-112 (FASFLLGSWVLSALFDFLLVE). Over 113 to 125 (AMQYFFGITAASN) the chain is Cytoplasmic. The helical transmembrane segment at 126–146 (LPSGFLAPVFALFVPFYCSIP) threads the bilayer. The Extracellular segment spans residues 147–163 (RVQVAQILGPLSITNKT). An N-linked (GlcNAc...) asparagine glycan is attached at Asn-161. A helical membrane pass occupies residues 164 to 184 (LIYILGLQLFTSGSYIWIVAI). Residues 185–345 (SGLMSGLCYN…NVATNFLLQH (161 aa)) are Cytoplasmic-facing. The UBA domain occupies 305–345 (EVSEEQVARLMEMGFSRGDALEALRASNNDLNVATNFLLQH).

As to quaternary structure, interacts with LMBR1L, FAF2, AMFR and VCP.

It is found in the endoplasmic reticulum membrane. Restricts trafficking of FAF2 from the endoplasmic reticulum to lipid droplets. In association with LMBR1L and E3 ubiquitin-protein ligase AMFR, negatively regulates the canonical Wnt signaling pathway in the lymphocytes by promoting the ubiquitin-mediated degradation of CTNNB1 and Wnt receptors FZD6 and LRP6. In Macaca fascicularis (Crab-eating macaque), this protein is Ubiquitin-associated domain-containing protein 2 (UBAC2).